Reading from the N-terminus, the 216-residue chain is 4-hydroxy-tetrahydrodipicolinate reductase (216 aa).

Residues Gly-7–Met-12, Gly-71–Thr-73, and Ala-95–Phe-98 each bind NAD(+). The active-site Proton donor/acceptor is the His-127. His-128 serves as a coordination point for (S)-2,3,4,5-tetrahydrodipicolinate. The active-site Proton donor is Lys-131. Gly-137–Thr-138 serves as a coordination point for (S)-2,3,4,5-tetrahydrodipicolinate.

The protein belongs to the DapB family.

Its subcellular location is the cytoplasm. It carries out the reaction (S)-2,3,4,5-tetrahydrodipicolinate + NAD(+) + H2O = (2S,4S)-4-hydroxy-2,3,4,5-tetrahydrodipicolinate + NADH + H(+). The catalysed reaction is (S)-2,3,4,5-tetrahydrodipicolinate + NADP(+) + H2O = (2S,4S)-4-hydroxy-2,3,4,5-tetrahydrodipicolinate + NADPH + H(+). The protein operates within amino-acid biosynthesis; L-lysine biosynthesis via DAP pathway; (S)-tetrahydrodipicolinate from L-aspartate: step 4/4. Its function is as follows. Catalyzes the conversion of 4-hydroxy-tetrahydrodipicolinate (HTPA) to tetrahydrodipicolinate. This chain is 4-hydroxy-tetrahydrodipicolinate reductase, found in Thermotoga sp. (strain RQ2).